Consider the following 547-residue polypeptide: Chaperonin GroEL (547 aa).

Residues 30–33 (TLGP), Lys-51, 87–91 (DGTTT), Gly-415, and Asp-495 contribute to the ATP site. Positions 525–547 (PDEKEAGGGAPDMGGMGGMGGMM) are disordered. Gly residues predominate over residues 531–547 (GGGAPDMGGMGGMGGMM).

Belongs to the chaperonin (HSP60) family. As to quaternary structure, forms a cylinder of 14 subunits composed of two heptameric rings stacked back-to-back. Interacts with the co-chaperonin GroES.

It is found in the cytoplasm. The enzyme catalyses ATP + H2O + a folded polypeptide = ADP + phosphate + an unfolded polypeptide.. Functionally, together with its co-chaperonin GroES, plays an essential role in assisting protein folding. The GroEL-GroES system forms a nano-cage that allows encapsulation of the non-native substrate proteins and provides a physical environment optimized to promote and accelerate protein folding. This is Chaperonin GroEL from Chromohalobacter salexigens (strain ATCC BAA-138 / DSM 3043 / CIP 106854 / NCIMB 13768 / 1H11).